Reading from the N-terminus, the 145-residue chain is MIVLDTTVLVYAKGAEHPLRDPCRDLVAAIADERIAATTTAEVIQEFVHVRARRRDRSDAAALGRVTMPNCSRRYSPSIEATSKRGLTLFETTPGLEACDAVLAAVAASAGATALVSADPAFADLSDVVHVIPDAAGMVSLLGDR.

One can recognise a PINc domain in the interval 2 to 129 (IVLDTTVLVY…PAFADLSDVV (128 aa)). Aspartate 5 and aspartate 100 together coordinate Mg(2+).

This sequence belongs to the PINc/VapC protein family. It depends on Mg(2+) as a cofactor.

In terms of biological role, toxic component of a type II toxin-antitoxin (TA) system. An RNase. The cognate antitoxin is VapB7. This is Ribonuclease VapC7 from Mycobacterium tuberculosis (strain ATCC 25618 / H37Rv).